Here is a 314-residue protein sequence, read N- to C-terminus: Olfactory receptor 1E1 (314 aa).

Topologically, residues 1–25 (MMGQNQTSISDFLLLGLPIQPEQQN) are extracellular. Asn-5 carries N-linked (GlcNAc...) asparagine glycosylation. A helical transmembrane segment spans residues 26–49 (LCYALFLAMYLTTLLGNLLIIVLI). Residues 50–57 (RLDSHLHT) lie on the Cytoplasmic side of the membrane. Residues 58 to 79 (PMYLFLSNLSFSDLCFSSVTIP) form a helical membrane-spanning segment. Residues 80–100 (KLLQNMQNQDPSIPYADCLTQ) lie on the Extracellular side of the membrane. Residues Cys-97 and Cys-189 are joined by a disulfide bond. A helical transmembrane segment spans residues 101–120 (MYFFLLFGDLESFLLVAMAY). Over 121-139 (DRYVAICFALHYTAIMSPM) the chain is Cytoplasmic. A helical membrane pass occupies residues 140 to 158 (LCLSLVALSWVLTTFHAML). The Extracellular portion of the chain corresponds to 159–195 (HTLLMARLCFCADNVIPHFFCDMSALLKLACSDTRVN). The chain crosses the membrane as a helical span at residues 196–219 (EWVIFIMGGLIVVIPFLLILGSYA). The Cytoplasmic portion of the chain corresponds to 220 to 236 (RIVSSILKVPSSKGICK). The chain crosses the membrane as a helical span at residues 237 to 259 (AFSTCGSHLSVVSLFYGTVIGLY). Over 260 to 272 (LCPSANSSTLKET) the chain is Extracellular. Residues 273 to 292 (VMAMMYTVVTPMLNPFIYSL) traverse the membrane as a helical segment. The Cytoplasmic segment spans residues 293–314 (RNGDMKGALSRVIHQKKTFFSL).

This sequence belongs to the G-protein coupled receptor 1 family.

It localises to the cell membrane. In terms of biological role, odorant receptor. The chain is Olfactory receptor 1E1 (OR1E1) from Gorilla gorilla gorilla (Western lowland gorilla).